The following is a 210-amino-acid chain: uncharacterized protein (210 aa).

This sequence to E.coli YkgK.

This is an uncharacterized protein from Escherichia coli (strain K12).